The sequence spans 832 residues: Leucine--tRNA ligase (832 aa).

The 'HIGH' region motif lies at 58 to 68; that stretch reads PYPSGDLHMGH. Residues 598–602 carry the 'KMSKS' region motif; the sequence is AMSKS. ATP is bound at residue Lys601.

Belongs to the class-I aminoacyl-tRNA synthetase family.

The protein localises to the cytoplasm. It catalyses the reaction tRNA(Leu) + L-leucine + ATP = L-leucyl-tRNA(Leu) + AMP + diphosphate. The chain is Leucine--tRNA ligase from Acidothermus cellulolyticus (strain ATCC 43068 / DSM 8971 / 11B).